A 314-amino-acid polypeptide reads, in one-letter code: Probable serine/threonine-protein kinase WNK11 (314 aa).

A disordered region spans residues 1 to 22 (MMTCASSDDNESEKDKDSESFV). The region spanning 31–289 (GRYGELLGSG…AAELLCDPFF (259 aa)) is the Protein kinase domain. An ATP-binding site is contributed by 111–114 (TEIC). The active-site Proton acceptor is the aspartate 178. A disordered region spans residues 295–314 (DDDEDGENNDNNGAGRIVVS).

It belongs to the protein kinase superfamily. Ser/Thr protein kinase family. WNK subfamily.

The catalysed reaction is L-seryl-[protein] + ATP = O-phospho-L-seryl-[protein] + ADP + H(+). It carries out the reaction L-threonyl-[protein] + ATP = O-phospho-L-threonyl-[protein] + ADP + H(+). May regulate flowering time by modulating the photoperiod pathway. This chain is Probable serine/threonine-protein kinase WNK11 (WNK11), found in Arabidopsis thaliana (Mouse-ear cress).